The sequence spans 216 residues: Cobalt-zinc-cadmium resistance protein CzcN (216 aa).

Transmembrane regions (helical) follow at residues Ile-27–Arg-47, Gly-50–Val-70, and Glu-116–Ile-136.

This sequence to A.xylosoxydans NccN.

It is found in the cell inner membrane. Its function is as follows. Component of the CZC cation-efflux system that confers resistance to cobalt, zinc and cadmium. This Cupriavidus metallidurans (strain ATCC 43123 / DSM 2839 / NBRC 102507 / CH34) (Ralstonia metallidurans) protein is Cobalt-zinc-cadmium resistance protein CzcN (czcN).